A 921-amino-acid chain; its full sequence is Isoleucine--tRNA ligase (921 aa).

Positions 57-67 match the 'HIGH' region motif; the sequence is PYANGNIHVGT. Glu-551 provides a ligand contact to L-isoleucyl-5'-AMP. The 'KMSKS' region signature appears at 592-596; the sequence is KMSKS. Lys-595 lines the ATP pocket. Residues Cys-885, Cys-888, Cys-905, and Cys-908 each coordinate Zn(2+).

The protein belongs to the class-I aminoacyl-tRNA synthetase family. IleS type 1 subfamily. Monomer. Requires Zn(2+) as cofactor.

The protein localises to the cytoplasm. It catalyses the reaction tRNA(Ile) + L-isoleucine + ATP = L-isoleucyl-tRNA(Ile) + AMP + diphosphate. Functionally, catalyzes the attachment of isoleucine to tRNA(Ile). As IleRS can inadvertently accommodate and process structurally similar amino acids such as valine, to avoid such errors it has two additional distinct tRNA(Ile)-dependent editing activities. One activity is designated as 'pretransfer' editing and involves the hydrolysis of activated Val-AMP. The other activity is designated 'posttransfer' editing and involves deacylation of mischarged Val-tRNA(Ile). The protein is Isoleucine--tRNA ligase of Kosmotoga olearia (strain ATCC BAA-1733 / DSM 21960 / TBF 19.5.1).